The following is a 201-amino-acid chain: MSGKSLLLKVILLGDGGVGKSSLMNRYVTNKFDSQAFHTIGVEFLNRDLEVDGRFVTLQIWDTAGQERFKSLRTPFYRGADCCLLTFSVDDRQSFENLGNWQKEFIYYADVKDPEHFPFVVLGNKVDKEDRQVTTEEAQAWCMENGDYPYLETSAKDDTNVTVAFEEAVRQVLAVEEQLEHCMLGHTIDLNSGSKAGSSCC.

Residues V18, G19, K20, S21, S22, D33, S34, A36, H38, and T39 each contribute to the GTP site. S21 is a Mg(2+) binding site. Residues 31 to 42 (KFDSQAFHTIGV) carry the Switch 1 motif. Phosphoserine is present on S34. Positions 39 and 62 each coordinate Mg(2+). Residues 64–78 (AGQERFKSLRTPFYR) carry the Switch 2 motif. GTP is bound by residues G65, N124, K125, A155, and K156. Residues C200 and C201 are each lipidated (S-geranylgeranyl cysteine).

It belongs to the small GTPase superfamily. Rab family. Interacts (GTP-bound form) with SGSM1; the GDP-bound form has much lower affinity for SGSM1. The GTP-bound form but not the GDP-bound form interacts with HPS4 and the BLOC-3 complex (heterodimer of HPS1 and HPS4) but does not interact with HPS1 alone. Interacts (GTP-bound form) with NDE1. It depends on Mg(2+) as a cofactor.

It is found in the cell membrane. Its subcellular location is the cytoplasmic vesicle. It localises to the phagosome membrane. The catalysed reaction is GTP + H2O = GDP + phosphate + H(+). Its activity is regulated as follows. Regulated by guanine nucleotide exchange factors (GEFs) which promote the exchange of bound GDP for free GTP. Regulated by GTPase activating proteins (GAPs) which increase the GTP hydrolysis activity. Inhibited by GDP dissociation inhibitors (GDIs). Its function is as follows. The small GTPases Rab are key regulators of intracellular membrane trafficking, from the formation of transport vesicles to their fusion with membranes. Rabs cycle between an inactive GDP-bound form and an active GTP-bound form that is able to recruit to membranes different sets of downstream effectors directly responsible for vesicle formation, movement, tethering and fusion. RAB9B is involved in the transport of proteins between the endosomes and the trans Golgi network. May use NDE1/NDEL1 as an effector to interact with the dynein motor complex in order to control retrograde trafficking of RAB9-associated late endosomes to the TGN. This chain is Ras-related protein Rab-9B (RAB9B), found in Pongo abelii (Sumatran orangutan).